The sequence spans 267 residues: MQEFTNPFPIGSSSLIHCMTNEISCEMLANGILALGCKPVMADDPREVLDFTKQSQALFINLGHLSAEKEKAIRMAASYANQSSLPMVVDAVGVTTSSIRKSLVKDLLDYRPTVIKGNMSEIRSLVGLKHHGVGVDASAKDQETEDLLQVLKDWCQTYPGMSFLVTGPKDLVVSKNQVAVLENGCTELDWITGTGDLVGALTAVFLSQGKTGFEASCLAVSYLNIAAEKIVVQGMGLEEFRYQVLNQLSLLRRDENWLDTIKGEVYE.

Met-41 contacts substrate. Lys-116 and Thr-166 together coordinate ATP. Residue Gly-193 participates in substrate binding.

It belongs to the Thz kinase family. Mg(2+) serves as cofactor.

The enzyme catalyses 5-(2-hydroxyethyl)-4-methylthiazole + ATP = 4-methyl-5-(2-phosphooxyethyl)-thiazole + ADP + H(+). The protein operates within cofactor biosynthesis; thiamine diphosphate biosynthesis; 4-methyl-5-(2-phosphoethyl)-thiazole from 5-(2-hydroxyethyl)-4-methylthiazole: step 1/1. Catalyzes the phosphorylation of the hydroxyl group of 4-methyl-5-beta-hydroxyethylthiazole (THZ). The chain is Hydroxyethylthiazole kinase 2 from Streptococcus pneumoniae (strain 70585).